We begin with the raw amino-acid sequence, 64 residues long: Prokaryotic ubiquitin-like protein Pup (64 aa).

An ARC ATPase binding region spans residues 20–58 (QELTLAASHVVSDVSEVDDLLDEIDGLLAENAEDFVTGF). E64 participates in a covalent cross-link: Isoglutamyl lysine isopeptide (Glu-Lys) (interchain with K-? in acceptor proteins).

The protein belongs to the prokaryotic ubiquitin-like protein family. Strongly interacts with the proteasome-associated ATPase ARC through a hydrophobic interface; the interacting region of Pup lies in its C-terminal half. There is one Pup binding site per ARC hexamer ring.

The protein operates within protein degradation; proteasomal Pup-dependent pathway. Functionally, protein modifier that is covalently attached to lysine residues of substrate proteins, thereby targeting them for proteasomal degradation. The tagging system is termed pupylation. This is Prokaryotic ubiquitin-like protein Pup from Rothia mucilaginosa (strain DY-18) (Stomatococcus mucilaginosus).